The primary structure comprises 315 residues: Probable branched-chain amino acid transport permease protein LivH (315 aa).

The next 9 membrane-spanning stretches (helical) occupy residues 14–34 (ILEG…GLTL), 49–69 (YAIV…ICPY), 70–90 (LSLP…YLAL), 100–120 (VEIL…VIGA), 150–170 (GILF…YLLL), 201–221 (LFSW…LPFM), 224–244 (IVPA…IVGG), 250–270 (GALI…YYLA), and 283–303 (VISL…ITGV).

This sequence belongs to the binding-protein-dependent transport system permease family. LivHM subfamily.

Its subcellular location is the cell membrane. Part of the binding-protein-dependent transport system for branched-chain amino acids. Probably responsible for the translocation of the substrates across the membrane. This is Probable branched-chain amino acid transport permease protein LivH (livH) from Methanocaldococcus jannaschii (strain ATCC 43067 / DSM 2661 / JAL-1 / JCM 10045 / NBRC 100440) (Methanococcus jannaschii).